The primary structure comprises 321 residues: F420-non-reducing hydrogenase iron-sulfur subunit G (321 aa).

This sequence belongs to the [NiFe]/[NiFeSe] hydrogenase small subunit family. The F420-non-reducing hydrogenase is composed of three subunits; MvhA, MvhD and MvhG. It forms a complex with the heterodisulfide reductase (Hdr).

It localises to the cytoplasm. Functionally, part of a complex that provides reducing equivalents for heterodisulfide reductase. In Archaeoglobus profundus (strain DSM 5631 / JCM 9629 / NBRC 100127 / Av18), this protein is F420-non-reducing hydrogenase iron-sulfur subunit G (mvhG).